The primary structure comprises 78 residues: Large ribosomal subunit protein bL28 (78 aa).

This sequence belongs to the bacterial ribosomal protein bL28 family.

The sequence is that of Large ribosomal subunit protein bL28 from Escherichia coli O139:H28 (strain E24377A / ETEC).